We begin with the raw amino-acid sequence, 415 residues long: Multifunctional CCA protein (415 aa).

Residues G8 and R11 each contribute to the ATP site. Positions 8 and 11 each coordinate CTP. Mg(2+) contacts are provided by D21 and D23. ATP-binding residues include R91, R143, and R146. CTP-binding residues include R91, R143, and R146. The HD domain maps to 232 to 333; that stretch reads TGVHVMMVID…VRLLERCDAL (102 aa).

Belongs to the tRNA nucleotidyltransferase/poly(A) polymerase family. Bacterial CCA-adding enzyme type 1 subfamily. Monomer. Can also form homodimers and oligomers. Requires Mg(2+) as cofactor. Ni(2+) serves as cofactor.

The catalysed reaction is a tRNA precursor + 2 CTP + ATP = a tRNA with a 3' CCA end + 3 diphosphate. It catalyses the reaction a tRNA with a 3' CCA end + 2 CTP + ATP = a tRNA with a 3' CCACCA end + 3 diphosphate. Its function is as follows. Catalyzes the addition and repair of the essential 3'-terminal CCA sequence in tRNAs without using a nucleic acid template. Adds these three nucleotides in the order of C, C, and A to the tRNA nucleotide-73, using CTP and ATP as substrates and producing inorganic pyrophosphate. tRNA 3'-terminal CCA addition is required both for tRNA processing and repair. Also involved in tRNA surveillance by mediating tandem CCA addition to generate a CCACCA at the 3' terminus of unstable tRNAs. While stable tRNAs receive only 3'-terminal CCA, unstable tRNAs are marked with CCACCA and rapidly degraded. In Cupriavidus taiwanensis (strain DSM 17343 / BCRC 17206 / CCUG 44338 / CIP 107171 / LMG 19424 / R1) (Ralstonia taiwanensis (strain LMG 19424)), this protein is Multifunctional CCA protein.